The sequence spans 432 residues: Killer cell immunoglobulin-like receptor 3DL1 (432 aa).

Residues Met-1–Ala-21 form the signal peptide. Topologically, residues His-22 to Asn-335 are extracellular. 3 Ig-like C2-type domains span residues Gly-42–Tyr-100, Gly-135–Tyr-202, and Gly-238–Ala-301. The N-linked (GlcNAc...) asparagine glycan is linked to Asn-44. The cysteines at positions 49 and 95 are disulfide-linked. Asn-137 carries N-linked (GlcNAc...) asparagine glycosylation. Disulfide bonds link Cys-142/Cys-195 and Cys-245/Cys-294. Asn-300 carries N-linked (GlcNAc...) asparagine glycosylation. The helical transmembrane segment at Leu-336 to Ser-356 threads the bilayer. The Cytoplasmic segment spans residues Cys-357–Lys-432.

The protein belongs to the immunoglobulin superfamily.

Its subcellular location is the cell membrane. Functionally, receptor on natural killer (NK) cells. Inhibits the activity of NK cells thus preventing cell lysis. The sequence is that of Killer cell immunoglobulin-like receptor 3DL1 (Kir3dl1) from Mus musculus (Mouse).